The chain runs to 332 residues: Glycerol-3-phosphate dehydrogenase [NAD(P)+] (332 aa).

Residues Ser11, Phe12, Lys32, and Lys106 each contribute to the NADPH site. 3 residues coordinate sn-glycerol 3-phosphate: Lys106, Gly137, and Ser139. Ala141 is an NADPH binding site. Residues Lys192, Asp245, Ser255, Arg256, and Asn257 each coordinate sn-glycerol 3-phosphate. Lys192 (proton acceptor) is an active-site residue. Arg256 is an NADPH binding site. Residues Val280 and Glu282 each contribute to the NADPH site.

Belongs to the NAD-dependent glycerol-3-phosphate dehydrogenase family.

Its subcellular location is the cytoplasm. The catalysed reaction is sn-glycerol 3-phosphate + NAD(+) = dihydroxyacetone phosphate + NADH + H(+). It carries out the reaction sn-glycerol 3-phosphate + NADP(+) = dihydroxyacetone phosphate + NADPH + H(+). Its pathway is membrane lipid metabolism; glycerophospholipid metabolism. Functionally, catalyzes the reduction of the glycolytic intermediate dihydroxyacetone phosphate (DHAP) to sn-glycerol 3-phosphate (G3P), the key precursor for phospholipid synthesis. This Staphylococcus aureus (strain USA300) protein is Glycerol-3-phosphate dehydrogenase [NAD(P)+].